The sequence spans 206 residues: Small ribosomal subunit protein uS2 (206 aa).

This sequence belongs to the universal ribosomal protein uS2 family.

This chain is Small ribosomal subunit protein uS2, found in Pyrobaculum neutrophilum (strain DSM 2338 / JCM 9278 / NBRC 100436 / V24Sta) (Thermoproteus neutrophilus).